Reading from the N-terminus, the 159-residue chain is 3-hydroxyacyl-[acyl-carrier-protein] dehydratase FabZ (159 aa).

H58 is a catalytic residue.

It belongs to the thioester dehydratase family. FabZ subfamily.

It localises to the cytoplasm. It catalyses the reaction a (3R)-hydroxyacyl-[ACP] = a (2E)-enoyl-[ACP] + H2O. In terms of biological role, involved in unsaturated fatty acids biosynthesis. Catalyzes the dehydration of short chain beta-hydroxyacyl-ACPs and long chain saturated and unsaturated beta-hydroxyacyl-ACPs. In Helicobacter pylori (strain HPAG1), this protein is 3-hydroxyacyl-[acyl-carrier-protein] dehydratase FabZ.